Reading from the N-terminus, the 271-residue chain is Methyltransferase psoC (271 aa).

The protein belongs to the methyltransferase superfamily. LaeA methyltransferase family.

The protein operates within secondary metabolite biosynthesis. Methyltransferase; part of the gene cluster that mediates the biosynthesis of pseurotin A, a competitive inhibitor of chitin synthase and an inducer of nerve-cell proliferation. The PKS-NRPS hybrid synthetase psoA is responsible for the biosynthesis of azaspirene, one of the first intermediates having the 1-oxa-7-azaspiro[4,4]-non-2-ene-4,6-dione core of pseurotin, via condensation of one acetyl-CoA, 4 malonyl-CoA, and a L-phenylalanine molecule. The dual-functional monooxygenase/methyltransferase psoF seems to be involved in the addition of the C3 methyl group onto the pseurotin scaffold. Azaspirene is then converted to synerazol through 4 steps including oxidation of C17 by the cytochrome P450 monooxygenase psoD, O-methylation of the hydroxy group of C8 by the methyltransferase psoC, and the trans-to-cis isomerization of the C13 olefin by the glutathione S-transferase psoE. The fourth step of synerazol production is performed by the dual-functional monooxygenase/methyltransferase psoF which seems to catalyze the epoxidation of the intermediate deepoxy-synerazol. Synerazol can be attacked by a water molecule nonenzymatically at two different positions to yield two diol products, pseurotin A and pseurotin D. In Aspergillus fumigatus (strain ATCC MYA-4609 / CBS 101355 / FGSC A1100 / Af293) (Neosartorya fumigata), this protein is Methyltransferase psoC.